The following is a 72-amino-acid chain: C-hordein (72 aa).

Pro residues predominate over residues 1-36 (FPQPQEPFPQQPQQPFPLQPQQPFPQQPQQPFPQPQ). The segment at 1–61 (FPQPQEPFPQ…QQPFPLQPHQ (61 aa)) is disordered. Low complexity predominate over residues 37–50 (QPFRQQAELIIPQQ).

Developing endosperm.

Sulfur-poor seed storage protein. In Hordeum vulgare (Barley), this protein is C-hordein.